The following is a 317-amino-acid chain: MKRLSLVTTNRLSPHGNFLPLCTFPLAVDMAALFQEASSCPVCSDYLEKPMSLECGCAVCFKCINSLQKEPHGEDLLCCCCSMVSQKNKIRPSWQLERLASHIKELEPKLKKILQMNPRMRKFQVDMTLDADTANNFLLISDDLRSVRSGCITQNRQDLAERFDVSICILGSPRFTCGRHYWEVDVGTSTEWDLGVCRESVHRKGRIHLTTERGFWTVSLRDGSRLSASTVPLTFLFVDRKLQRVGIFLDMGMQNVSFFDAEGGSHVYTFRSVSAEEPLHLFFAPPSPPNGDKSVLSICPVINPGTTDAPVHPGEAK.

The segment at 40–82 (CPVCSDYLEKPMSLECGCAVCFKCINSLQKEPHGEDLLCCCCS) adopts an RING-type zinc-finger fold. One can recognise a B30.2/SPRY domain in the interval 107–301 (EPKLKKILQM…DKSVLSICPV (195 aa)).

In terms of processing, phosphorylated by PKC and CDK1. The antiproliferative effect seems to be positively regulated by PKC phosphorylation and negatively by CDK1 phosphorylation. In terms of tissue distribution, seems to be expressed in prostate and less abundantly in adult brain, fetal liver, and fetal kidney.

The protein resides in the cytoplasm. It is found in the nucleus. Its function is as follows. Negatively regulates the G2-M phase transition, possibly by promoting cyclin B1/CCNB1 and CDK1 proteasomal degradation and thereby preventing their accumulation during interphase. The sequence is that of Ret finger protein-like 1 (RFPL1) from Homo sapiens (Human).